Reading from the N-terminus, the 205-residue chain is Rho-related GTP-binding protein RhoQ (205 aa).

Residue 16 to 23 (GDGAVGKT) participates in GTP binding. Residues 38-46 (YVPTVFDHY) carry the Effector region motif. GTP contacts are provided by residues 63 to 67 (DTAGQ) and 121 to 124 (TQID). Cysteine methyl ester is present on C202. C202 carries the S-farnesyl cysteine lipid modification. The propeptide at 203-205 (LIT) is removed in mature form.

Belongs to the small GTPase superfamily. Rho family. In terms of assembly, interacts with CDC42EP4 in a GTP-dependent manner. Interacts with ARHGAP33/TCGAP. Interacts with CDC42EP1, CDC42EP2, CDC42EP3, PARD6A, PARD6G (and probably PARD6B) in a GTP-dependent manner. Part of a quaternary complex containing PARD3, some PARD6 protein (PARD6A, PARD6B or PARD6G) and some atypical PKC protein (PRKCI or PRKCZ). Interacts with EXO70 in a GTP-dependent manner. Interacts with GOPC. In terms of processing, may be post-translationally modified by both palmitoylation and polyisoprenylation.

The protein localises to the cytoplasm. The protein resides in the cell membrane. Its activity is regulated as follows. Regulated by guanine nucleotide exchange factors (GEFs) which promote the exchange of bound GDP for free GTP, GTPase activating proteins (GAPs) which increase the GTP hydrolysis activity, and GDP dissociation inhibitors which inhibit the dissociation of the nucleotide from the GTPase. Plasma membrane-associated small GTPase which cycles between an active GTP-bound and an inactive GDP-bound state. In active state binds to a variety of effector proteins to regulate cellular responses. Involved in epithelial cell polarization processes. May play a role in CFTR trafficking to the plasma membrane. Causes the formation of thin, actin-rich surface projections called filopodia. This is Rho-related GTP-binding protein RhoQ (RHOQ) from Homo sapiens (Human).